Consider the following 290-residue polypeptide: Light-independent protochlorophyllide reductase iron-sulfur ATP-binding protein (290 aa).

Residues 10-15 and K39 each bind ATP; that span reads GIGKST. A Mg(2+)-binding site is contributed by S14. 2 residues coordinate [4Fe-4S] cluster: C95 and C129. 180–181 lines the ATP pocket; sequence NR.

Belongs to the NifH/BchL/ChlL family. As to quaternary structure, homodimer. Protochlorophyllide reductase is composed of three subunits; ChlL, ChlN and ChlB. [4Fe-4S] cluster serves as cofactor.

It is found in the plastid. It localises to the chloroplast. The catalysed reaction is chlorophyllide a + oxidized 2[4Fe-4S]-[ferredoxin] + 2 ADP + 2 phosphate = protochlorophyllide a + reduced 2[4Fe-4S]-[ferredoxin] + 2 ATP + 2 H2O. Its pathway is porphyrin-containing compound metabolism; chlorophyll biosynthesis (light-independent). Component of the dark-operative protochlorophyllide reductase (DPOR) that uses Mg-ATP and reduced ferredoxin to reduce ring D of protochlorophyllide (Pchlide) to form chlorophyllide a (Chlide). This reaction is light-independent. The L component serves as a unique electron donor to the NB-component of the complex, and binds Mg-ATP. This is Light-independent protochlorophyllide reductase iron-sulfur ATP-binding protein from Anthoceros angustus (Hornwort).